Reading from the N-terminus, the 205-residue chain is Outer-membrane lipoprotein carrier protein (205 aa).

Residues 1-22 (MKKTTLKFAALTLLGLSNLALA) form the signal peptide.

It belongs to the LolA family. Monomer.

The protein localises to the periplasm. Its function is as follows. Participates in the translocation of lipoproteins from the inner membrane to the outer membrane. Only forms a complex with a lipoprotein if the residue after the N-terminal Cys is not an aspartate (The Asp acts as a targeting signal to indicate that the lipoprotein should stay in the inner membrane). The protein is Outer-membrane lipoprotein carrier protein of Haemophilus influenzae (strain PittEE).